Consider the following 276-residue polypeptide: Small ribosomal subunit protein uS2 (276 aa).

Serine 2 is modified (N-acetylserine).

This sequence belongs to the universal ribosomal protein uS2 family. Component of the small ribosomal subunit. Mature ribosomes consist of a small (40S) and a large (60S) subunit. The 40S subunit contains about 33 different proteins and 1 molecule of RNA (18S). The 60S subunit contains about 49 different proteins and 3 molecules of RNA (28S, 5.8S and 5S). Interacts with rps-21.

It is found in the cytoplasm. Required for the assembly and/or stability of the 40S ribosomal subunit. Required for the processing of the 20S rRNA-precursor to mature 18S rRNA in a late step of the maturation of 40S ribosomal subunits. Involved in cold-warm shock-induced translocation of the RNA exosome components from the nucleolus to nucleoplasm. The protein is Small ribosomal subunit protein uS2 of Caenorhabditis elegans.